The following is a 156-amino-acid chain: Protein-export protein SecB (156 aa).

It belongs to the SecB family. In terms of assembly, homotetramer, a dimer of dimers. One homotetramer interacts with 1 SecA dimer.

It is found in the cytoplasm. Functionally, one of the proteins required for the normal export of preproteins out of the cell cytoplasm. It is a molecular chaperone that binds to a subset of precursor proteins, maintaining them in a translocation-competent state. It also specifically binds to its receptor SecA. The protein is Protein-export protein SecB of Paraburkholderia xenovorans (strain LB400).